The following is a 263-amino-acid chain: Receptor-transporting protein 1 (263 aa).

Over 1 to 238 (MRIFRPWRLR…ETGSGWNFCS (238 aa)) the chain is Cytoplasmic. The 3CxxC-type zinc-finger motif lies at 88-197 (ASGRFHCSWC…GEFCEACQEG (110 aa)). Residues 239–259 (IPWCLFWATVLLLIIYLQLSF) traverse the membrane as a helical segment. The Extracellular portion of the chain corresponds to 260–263 (RSSV).

Belongs to the TMEM7 family. In terms of assembly, interacts with olfactory receptors.

It localises to the cell membrane. Its function is as follows. Specifically promotes functional cell surface expression of olfactory receptors, but not of other GPCRs. This is Receptor-transporting protein 1 (RTP1) from Macaca fascicularis (Crab-eating macaque).